A 416-amino-acid chain; its full sequence is Imidazolonepropionase (416 aa).

2 residues coordinate Fe(3+): His78 and His80. Zn(2+)-binding residues include His78 and His80. 3 residues coordinate 4-imidazolone-5-propanoate: Arg87, Tyr150, and His183. Residue Tyr150 participates in N-formimidoyl-L-glutamate binding. His248 serves as a coordination point for Fe(3+). Position 248 (His248) interacts with Zn(2+). 4-imidazolone-5-propanoate is bound at residue Gln251. Fe(3+) is bound at residue Asp323. Asp323 lines the Zn(2+) pocket. N-formimidoyl-L-glutamate-binding residues include Asn325 and Gly327. Thr328 is a binding site for 4-imidazolone-5-propanoate.

This sequence belongs to the metallo-dependent hydrolases superfamily. HutI family. Requires Zn(2+) as cofactor. The cofactor is Fe(3+).

The protein localises to the cytoplasm. It carries out the reaction 4-imidazolone-5-propanoate + H2O = N-formimidoyl-L-glutamate. It functions in the pathway amino-acid degradation; L-histidine degradation into L-glutamate; N-formimidoyl-L-glutamate from L-histidine: step 3/3. Catalyzes the hydrolytic cleavage of the carbon-nitrogen bond in imidazolone-5-propanoate to yield N-formimidoyl-L-glutamate. It is the third step in the universal histidine degradation pathway. This chain is Imidazolonepropionase, found in Vibrio campbellii (strain ATCC BAA-1116).